Reading from the N-terminus, the 292-residue chain is Aspartate carbamoyltransferase catalytic subunit (292 aa).

Positions 49 and 50 each coordinate carbamoyl phosphate. K77 contributes to the L-aspartate binding site. R99, H127, and Q130 together coordinate carbamoyl phosphate. R161 and R211 together coordinate L-aspartate. 2 residues coordinate carbamoyl phosphate: G250 and P251.

Belongs to the aspartate/ornithine carbamoyltransferase superfamily. ATCase family. In terms of assembly, heterododecamer (2C3:3R2) of six catalytic PyrB chains organized as two trimers (C3), and six regulatory PyrI chains organized as three dimers (R2).

The catalysed reaction is carbamoyl phosphate + L-aspartate = N-carbamoyl-L-aspartate + phosphate + H(+). The protein operates within pyrimidine metabolism; UMP biosynthesis via de novo pathway; (S)-dihydroorotate from bicarbonate: step 2/3. Functionally, catalyzes the condensation of carbamoyl phosphate and aspartate to form carbamoyl aspartate and inorganic phosphate, the committed step in the de novo pyrimidine nucleotide biosynthesis pathway. This is Aspartate carbamoyltransferase catalytic subunit from Campylobacter lari (strain RM2100 / D67 / ATCC BAA-1060).